An 89-amino-acid polypeptide reads, in one-letter code: Arminin 7591 (89 aa).

Positions 1–18 are cleaved as a signal peptide; the sequence is MRSAFAVLFLALIAITYS. The propeptide occupies 19-58; that stretch reads KNYEDVKEEIKNEVENEILKDLEEDVNEFDDNVQEEVNDA. The residue at position 86 (Leu-86) is a Leucine amide.

This sequence belongs to the arminin family. Expressed in entodermal epithelium along the body column.

It is found in the secreted. It localises to the target cell membrane. Antimicrobial peptide with a broad-spectrum antimicrobial activity. Keeps its antibacterial activity under a wide range of salt concentrations that mimic physiological conditions of human blood, which is surprising, since Hydra is an obligate freshwater animal with nearly no salt tolerance. Does not affect red blood cells. The sequence is that of Arminin 7591 from Hydra vulgaris (Hydra).